Reading from the N-terminus, the 356-residue chain is Protein-glutamate methylesterase/protein-glutamine glutaminase 2 (356 aa).

A Response regulatory domain is found at 4 to 121; it reads KVLIVDDSAV…KGFLEESSHE (118 aa). A 4-aspartylphosphate modification is found at aspartate 55. The CheB-type methylesterase domain maps to 169-356; that stretch reads FATTERIIAI…LELIAKAICR (188 aa). Catalysis depends on residues serine 181, histidine 207, and aspartate 303.

This sequence belongs to the CheB family. Phosphorylated by CheA. Phosphorylation of the N-terminal regulatory domain activates the methylesterase activity.

The protein localises to the cytoplasm. It carries out the reaction [protein]-L-glutamate 5-O-methyl ester + H2O = L-glutamyl-[protein] + methanol + H(+). The enzyme catalyses L-glutaminyl-[protein] + H2O = L-glutamyl-[protein] + NH4(+). In terms of biological role, involved in chemotaxis. Part of a chemotaxis signal transduction system that modulates chemotaxis in response to various stimuli. Catalyzes the demethylation of specific methylglutamate residues introduced into the chemoreceptors (methyl-accepting chemotaxis proteins or MCP) by CheR. Also mediates the irreversible deamidation of specific glutamine residues to glutamic acid. The protein is Protein-glutamate methylesterase/protein-glutamine glutaminase 2 of Chromobacterium violaceum (strain ATCC 12472 / DSM 30191 / JCM 1249 / CCUG 213 / NBRC 12614 / NCIMB 9131 / NCTC 9757 / MK).